A 67-amino-acid polypeptide reads, in one-letter code: Small ribosomal subunit protein eS27 (67 aa).

Positions 22, 25, 41, and 44 each coordinate Zn(2+). Residues 22–44 form a C4-type zinc finger; the sequence is CPDCGNEQVTFSHAAMVVRCLVC.

Belongs to the eukaryotic ribosomal protein eS27 family. Part of the 30S ribosomal subunit. Zn(2+) serves as cofactor.

The protein is Small ribosomal subunit protein eS27 of Pyrobaculum calidifontis (strain DSM 21063 / JCM 11548 / VA1).